A 91-amino-acid chain; its full sequence is Small ribosomal subunit protein uS19 (91 aa).

This sequence belongs to the universal ribosomal protein uS19 family.

Its function is as follows. Protein S19 forms a complex with S13 that binds strongly to the 16S ribosomal RNA. The sequence is that of Small ribosomal subunit protein uS19 from Janthinobacterium sp. (strain Marseille) (Minibacterium massiliensis).